Here is a 471-residue protein sequence, read N- to C-terminus: FAD-linked oxidoreductase sorD (471 aa).

An N-terminal signal peptide occupies residues 1 to 23 (MQAASAFATCLLASVGGNSSAVA). Residues asparagine 18, asparagine 29, asparagine 174, asparagine 279, and asparagine 351 are each glycosylated (N-linked (GlcNAc...) asparagine). The 172-residue stretch at 41-212 (LLTTPSAIVW…TDFSIRTEPV (172 aa)) folds into the FAD-binding PCMH-type domain.

The protein belongs to the oxygen-dependent FAD-linked oxidoreductase family. Requires FAD as cofactor.

It participates in secondary metabolite biosynthesis. Functionally, FAD-linked oxidoreductase; part of the gene cluster that mediates the biosynthesis of sorbicillinoids, a diverse group of yellow secondary metabolites that restrict growth of competing pathogenic fungi but not of bacteria. Sorbicillinoids biosynthesis requires the action of two PKSs. SorA iteratively combines three acetyl units and the growing chain is modified by the ketoacyl reductase subunit, and optional by the enoyl reductase subunit in the second cycle. The polyketide is then handed over to the PKS SorB, which adds three more acetyl units, and two methyl groups. SorB releases an aldehyde, which undergoes spontaneous cyclization resulting in the formation of sorbicillin or 2',3'-dihydrosorbicillin. The monooxygenase sorC oxidizes sorbicillin and 2',3'-dihydrosorbicillin to 2',3'-dihydrosorbicillinol and sorbicillinol, respectively. The oxidoreductase sorD further converts sorbicillinol into oxosorbicillinol. Sorbicillinol is the building block for the other sorbicillinoids such as disorbicillinol, bisvertinolon, and dihydrobisvertinolone. The chain is FAD-linked oxidoreductase sorD from Penicillium rubens (strain ATCC 28089 / DSM 1075 / NRRL 1951 / Wisconsin 54-1255) (Penicillium chrysogenum).